A 122-amino-acid polypeptide reads, in one-letter code: Large ribosomal subunit protein uL14 (122 aa).

Belongs to the universal ribosomal protein uL14 family. In terms of assembly, part of the 50S ribosomal subunit. Forms a cluster with proteins L3 and L19. In the 70S ribosome, L14 and L19 interact and together make contacts with the 16S rRNA in bridges B5 and B8.

Its function is as follows. Binds to 23S rRNA. Forms part of two intersubunit bridges in the 70S ribosome. The polypeptide is Large ribosomal subunit protein uL14 (Methylococcus capsulatus (strain ATCC 33009 / NCIMB 11132 / Bath)).